A 412-amino-acid chain; its full sequence is Allantoate amidohydrolase (412 aa).

Positions 84, 95, 130, and 193 each coordinate Zn(2+). Arg218, Asn278, and Arg291 together coordinate allantoate. His385 is a Zn(2+) binding site.

This sequence belongs to the peptidase M20 family. In terms of assembly, homodimer. Requires Zn(2+) as cofactor.

It localises to the cytoplasm. The catalysed reaction is allantoate + H2O + 2 H(+) = (S)-2-ureidoglycine + NH4(+) + CO2. It functions in the pathway nitrogen metabolism; (S)-allantoin degradation. In terms of biological role, involved in the anaerobic nitrogen utilization via the assimilation of allantoin. Catalyzes specifically the hydrolysis of allantoate to yield CO2, NH3 and S-ureidoglycine, which is unstable and readily undergoes a second deamination by S-ureidoglycine aminohydrolase AllE to yield S-ureidoglycolate and NH3. The protein is Allantoate amidohydrolase of Bacillus subtilis (strain 168).